We begin with the raw amino-acid sequence, 268 residues long: UPF0328 protein ECU09_2030 (268 aa).

The protein belongs to the UPF0328 family.

This chain is UPF0328 protein ECU09_2030, found in Encephalitozoon cuniculi (strain GB-M1) (Microsporidian parasite).